The sequence spans 595 residues: Probable xyloglucan glycosyltransferase 9 (595 aa).

Helical transmembrane passes span 30-50 (AFVV…INGW) and 77-97 (ATYV…LFLI). The active site involves aspartate 177. Substrate is bound by residues aspartate 236 and aspartate 238. The active site involves aspartate 330. Transmembrane regions (helical) follow at residues 408-428 (LILP…TMFV), 433-453 (LPDW…ILPS), 545-564 (IYKK…ARSL), and 570-590 (IHFY…LDLI).

This sequence belongs to the glycosyltransferase 2 family. Plant cellulose synthase-like C subfamily.

The protein localises to the golgi apparatus membrane. In terms of biological role, probable beta-1,4-glucan synthase rather involved in the synthesis of the xyloglucan backbone than cellulose. Seems to work simultaneously with xyloglucan 6-xylosyltransferase. Xyloglucan is a noncellulosic polysaccharides of plant cell wall and consists of a glucan backbone substituted by xylose, galactose and fucose. The chain is Probable xyloglucan glycosyltransferase 9 (CSLC9) from Oryza sativa subsp. japonica (Rice).